The chain runs to 165 residues: 6,7-dimethyl-8-ribityllumazine synthase 2 (165 aa).

Residues tryptophan 24, 56–58 (SFE), and 80–82 (LVV) contribute to the 5-amino-6-(D-ribitylamino)uracil site. Arginine 88 serves as the catalytic Proton donor. Position 113 (serine 113) interacts with 5-amino-6-(D-ribitylamino)uracil. Residue histidine 127 participates in (2S)-2-hydroxy-3-oxobutyl phosphate binding.

It belongs to the DMRL synthase family.

It catalyses the reaction (2S)-2-hydroxy-3-oxobutyl phosphate + 5-amino-6-(D-ribitylamino)uracil = 6,7-dimethyl-8-(1-D-ribityl)lumazine + phosphate + 2 H2O + H(+). The protein operates within cofactor biosynthesis; riboflavin biosynthesis; riboflavin from 2-hydroxy-3-oxobutyl phosphate and 5-amino-6-(D-ribitylamino)uracil: step 1/2. Catalyzes the formation of 6,7-dimethyl-8-ribityllumazine by condensation of 5-amino-6-(D-ribitylamino)uracil with 3,4-dihydroxy-2-butanone 4-phosphate. This is the penultimate step in the biosynthesis of riboflavin. The sequence is that of 6,7-dimethyl-8-ribityllumazine synthase 2 from Bradyrhizobium diazoefficiens (strain JCM 10833 / BCRC 13528 / IAM 13628 / NBRC 14792 / USDA 110).